The primary structure comprises 68 residues: Disintegrin EMS11A (68 aa).

The region spanning 1 to 65 (NSAHPCCDPV…DCPRNRYKGK (65 aa)) is the Disintegrin domain. 4 disulfides stabilise this stretch: C6-C29, C20-C26, C25-C50, and C38-C57. Residues 42–44 (MLD) carry the Cell attachment site; atypical (MLD) motif.

Belongs to the disintegrin family. Dimeric disintegrin subfamily. In terms of assembly, heterodimer; disulfide-linked. In terms of tissue distribution, expressed by the venom gland.

The protein localises to the secreted. Functionally, poor inhibitor of platelet aggregation. The disintegrin inhibits the adhesion of both the alpha-4/beta-1 (ITGA4/ITGB1) and the alpha-5/beta-1 (ITGA5/ITGB1) integrins to VCAM-1 and fibronectin respectively with almost the same degree of specificity. Inhibition on alpha-IIb/beta-3 (ITGA2B/ITGB3) is low. This chain is Disintegrin EMS11A, found in Echis multisquamatus (Central Asian sand viper).